We begin with the raw amino-acid sequence, 544 residues long: Methionine--tRNA ligase (544 aa).

A 'HIGH' region motif is present at residues 10 to 20 (PYANGSLHLGH). C141, C144, C153, and C156 together coordinate Zn(2+). The 'KMSKS' region signature appears at 329 to 333 (KLSTS). T332 is an ATP binding site.

It belongs to the class-I aminoacyl-tRNA synthetase family. MetG type 1 subfamily. In terms of assembly, monomer. It depends on Zn(2+) as a cofactor.

It localises to the cytoplasm. The catalysed reaction is tRNA(Met) + L-methionine + ATP = L-methionyl-tRNA(Met) + AMP + diphosphate. Is required not only for elongation of protein synthesis but also for the initiation of all mRNA translation through initiator tRNA(fMet) aminoacylation. The sequence is that of Methionine--tRNA ligase from Bacillus cereus (strain G9842).